The following is a 303-amino-acid chain: CDAN1-interacting nuclease 1 (303 aa).

It localises to the nucleus. The protein resides in the cytoplasm. In terms of biological role, may play a role in erythroid cell differentiation. The chain is CDAN1-interacting nuclease 1 from Xenopus laevis (African clawed frog).